Reading from the N-terminus, the 70-residue chain is DNA-directed RNA polymerase subunit omega (70 aa).

This sequence belongs to the RNA polymerase subunit omega family. In terms of assembly, the RNAP catalytic core consists of 2 alpha, 1 beta, 1 beta' and 1 omega subunit. When a sigma factor is associated with the core the holoenzyme is formed, which can initiate transcription.

The enzyme catalyses RNA(n) + a ribonucleoside 5'-triphosphate = RNA(n+1) + diphosphate. Its function is as follows. Promotes RNA polymerase assembly. Latches the N- and C-terminal regions of the beta' subunit thereby facilitating its interaction with the beta and alpha subunits. This is DNA-directed RNA polymerase subunit omega from Bacillus mycoides (strain KBAB4) (Bacillus weihenstephanensis).